The chain runs to 95 residues: Protein TusB (95 aa).

This sequence belongs to the DsrH/TusB family. In terms of assembly, heterohexamer, formed by a dimer of trimers. The hexameric TusBCD complex contains 2 copies each of TusB, TusC and TusD. The TusBCD complex interacts with TusE.

It localises to the cytoplasm. Functionally, part of a sulfur-relay system required for 2-thiolation of 5-methylaminomethyl-2-thiouridine (mnm(5)s(2)U) at tRNA wobble positions. This Klebsiella pneumoniae subsp. pneumoniae (strain ATCC 700721 / MGH 78578) protein is Protein TusB.